Here is a 663-residue protein sequence, read N- to C-terminus: Rho GTPase-activating protein 18 (663 aa).

Disordered stretches follow at residues 14–73 (AYHP…DESM) and 85–106 (RSNENRQEGQEAIVVKEPDEGE). Basic and acidic residues predominate over residues 27 to 37 (SHVKGGDEATS). Polar residues predominate over residues 38–51 (SRRYGQYTINQEGS). Residues S65 and S68 each carry the phosphoserine modification. The segment covering 85–102 (RSNENRQEGQEAIVVKEP) has biased composition (basic and acidic residues). T156 carries the post-translational modification Phosphothreonine. 2 disordered regions span residues 173–228 (FAQQ…PASE) and 245–277 (KEFSKERTQKISSNDSLPSFRLPKDKTGTTRIG). 2 stretches are compositionally biased toward basic and acidic residues: residues 178–205 (EAQEKPPDDSDLRSVRTNENKGQGKDDQ) and 212–222 (DSKEQISRVPE). Residues S260 and S263 each carry the phosphoserine modification. One can recognise a Rho-GAP domain in the interval 324 to 523 (IPLTILLEQD…LLIRYQKILW (200 aa)). S610 bears the Phosphoserine mark.

In terms of assembly, interacts with MPHOSPH6. As to expression, widely expressed: expressed in most organs, except small intestine.

It localises to the cytoplasm. Functionally, rho GTPase activating protein that suppresses F-actin polymerization by inhibiting Rho. Rho GTPase activating proteins act by converting Rho-type GTPases to an inactive GDP-bound state. Plays a key role in tissue tension and 3D tissue shape by regulating cortical actomyosin network formation. Acts downstream of YAP1 and inhibits actin polymerization, which in turn reduces nuclear localization of YAP1. Regulates cell shape, spreading, and migration. The polypeptide is Rho GTPase-activating protein 18 (Mus musculus (Mouse)).